The sequence spans 190 residues: CASP-like protein 1E2 (190 aa).

The interval 1 to 21 is disordered; it reads MEHEGKNNMNGMEMEKGKREL. At 1–28 the chain is on the cytoplasmic side; it reads MEHEGKNNMNGMEMEKGKRELGSRKGVE. The chain crosses the membrane as a helical span at residues 29–49; that stretch reads LTMRVLALILTMAAATVLGVA. Residues 50 to 83 are Extracellular-facing; it reads KQTKVVSIKLIPTLPPLDITTTAKASYLSAFVYN. The chain crosses the membrane as a helical span at residues 84-104; that stretch reads ISVNAIACGYTAISIAILMIS. The Cytoplasmic portion of the chain corresponds to 105-111; that stretch reads RGRRSKK. A helical transmembrane segment spans residues 112-132; the sequence is LLMVVLLGDLVMVALLFSGTG. At 133-163 the chain is on the extracellular side; sequence AASAIGLMGLHGNKHVMWKKVCGVFGKFCHR. Residues 164 to 184 traverse the membrane as a helical segment; sequence AAPSLPLTLLAAVVFMFLVVL. Topologically, residues 185–190 are cytoplasmic; the sequence is DAIKLP.

The protein belongs to the Casparian strip membrane proteins (CASP) family. Homodimer and heterodimers.

The protein resides in the cell membrane. In Arabidopsis thaliana (Mouse-ear cress), this protein is CASP-like protein 1E2.